The primary structure comprises 444 residues: Acyl-CoA 6-desaturase (444 aa).

Over 1–131 (MGKGGNQGEG…DMNLFKTNHV (131 aa)) the chain is Cytoplasmic. The Cytochrome b5 heme-binding domain maps to 18 to 95 (VPTFSWEEIQ…LKPLLIGELA (78 aa)). The helical transmembrane segment at 132–152 (FFLLLLAHIIALESIAWFTVF) threads the bilayer. Residues 153–157 (YFGNG) are Lumenal-facing. The chain crosses the membrane as a helical span at residues 158 to 178 (WIPTLITAFVLATSQAQAGWL). Residues 179 to 264 (QHDYGHLSVY…KYLPYNHQHE (86 aa)) lie on the Cytoplasmic side of the membrane. The Histidine box-1 motif lies at 180 to 184 (HDYGH). Positions 217 to 221 (HFQHH) match the Histidine box-2 motif. The chain crosses the membrane as a helical span at residues 265–285 (YFFLIGPPLLIPMYFQYQIIM). At 286–305 (TMIVHKNWVDLAWAVSYYIR) the chain is on the lumenal side. A helical membrane pass occupies residues 306-326 (FFITYIPFYGILGALLFLNFI). The Cytoplasmic segment spans residues 327-444 (RFLESHWFVW…KLWLDAYLHK (118 aa)). The Histidine box-3 motif lies at 382–386 (QIEHH).

The protein belongs to the fatty acid desaturase type 1 family. In terms of tissue distribution, expressed in a wide array of tissues, highest expression is found in liver followed by brain, lung, heart, and retina. A lower level is found in breast tumor when compared with normal tissues; lowest levels were found in patients with poor prognostic index.

The protein localises to the endoplasmic reticulum membrane. It catalyses the reaction (9Z,12Z)-octadecadienoyl-CoA + 2 Fe(II)-[cytochrome b5] + O2 + 2 H(+) = (6Z,9Z,12Z)-octadecatrienoyl-CoA + 2 Fe(III)-[cytochrome b5] + 2 H2O. It carries out the reaction (9Z,12Z,15Z)-octadecatrienoyl-CoA + 2 Fe(II)-[cytochrome b5] + O2 + 2 H(+) = (6Z,9Z,12Z,15Z)-octadecatetraenoyl-CoA + 2 Fe(III)-[cytochrome b5] + 2 H2O. The catalysed reaction is hexadecanoyl-CoA + 2 Fe(II)-[cytochrome b5] + O2 + 2 H(+) = (6Z)-hexadecenoyl-CoA + 2 Fe(III)-[cytochrome b5] + 2 H2O. The enzyme catalyses (9Z,12Z,15Z,18Z,21Z)-tetracosapentaenoyl-CoA + 2 Fe(II)-[cytochrome b5] + O2 + 2 H(+) = (6Z,9Z,12Z,15Z,18Z,21Z)-tetracosahexaenoyl-CoA + 2 Fe(III)-[cytochrome b5] + 2 H2O. It catalyses the reaction (11E)-octadecenoyl-CoA + 2 Fe(II)-[cytochrome b5] + O2 + 2 H(+) = (6Z,11E)-octadecadienoyl-CoA + 2 Fe(III)-[cytochrome b5] + 2 H2O. It carries out the reaction (11Z,14Z)-eicosadienoyl-CoA + 2 Fe(II)-[cytochrome b5] + O2 + 2 H(+) = (8Z,11Z,14Z)-eicosatrienoyl-CoA + 2 Fe(III)-[cytochrome b5] + 2 H2O. The catalysed reaction is (11Z,14Z,17Z)-eicosatrienoyl-CoA + 2 Fe(II)-[cytochrome b5] + O2 + 2 H(+) = (8Z,11Z,14Z,17Z)-eicosatetraenoyl-CoA + 2 Fe(III)-[cytochrome b5] + 2 H2O. It functions in the pathway lipid metabolism; polyunsaturated fatty acid biosynthesis. In terms of biological role, involved in the biosynthesis of highly unsaturated fatty acids (HUFA) from the essential polyunsaturated fatty acids (PUFA) linoleic acid (LA) (18:2n-6) and alpha-linolenic acid (ALA) (18:3n-3) precursors, acting as a fatty acyl-coenzyme A (CoA) desaturase that introduces a cis double bond at carbon 6 of the fatty acyl chain. Catalyzes the first and rate limiting step in this pathway which is the desaturation of LA (18:2n-6) and ALA (18:3n-3) into gamma-linoleate (GLA) (18:3n-6) and stearidonate (18:4n-3), respectively. Subsequently, in the biosynthetic pathway of HUFA n-3 series, it desaturates tetracosapentaenoate (24:5n-3) to tetracosahexaenoate (24:6n-3), which is then converted to docosahexaenoate (DHA)(22:6n-3), an important lipid for nervous system function. Desaturates hexadecanate (palmitate) to produce 6Z-hexadecenoate (sapienate), a fatty acid unique to humans and major component of human sebum, that has been implicated in the development of acne and may have potent antibacterial activity. It can also desaturate (11E)-octadecenoate (trans-vaccenoate, the predominant trans fatty acid in human milk) at carbon 6 generating (6Z,11E)-octadecadienoate. In addition to Delta-6 activity, this enzyme exhibits Delta-8 activity with slight biases toward n-3 fatty acyl-CoA substrates. In Homo sapiens (Human), this protein is Acyl-CoA 6-desaturase.